A 350-amino-acid polypeptide reads, in one-letter code: uncharacterized protein (350 aa).

A signal peptide spans 1–26 (MKKSGWLVVALIALVVLGVVTSIAVN).

This is an uncharacterized protein from Archaeoglobus fulgidus (strain ATCC 49558 / DSM 4304 / JCM 9628 / NBRC 100126 / VC-16).